The primary structure comprises 234 residues: uncharacterized protein (234 aa).

Residues 62–99 (NEESISDLNSDNPGNSEPSDVESFVLSDEDENSEKDFS) form a disordered region. Positions 67 to 79 (SDLNSDNPGNSEP) are enriched in polar residues.

This is an uncharacterized protein from Acanthamoeba polyphaga (Amoeba).